We begin with the raw amino-acid sequence, 417 residues long: Imidazolonepropionase (417 aa).

Residues H77 and H79 each contribute to the Fe(3+) site. 2 residues coordinate Zn(2+): H77 and H79. Positions 86, 149, and 182 each coordinate 4-imidazolone-5-propanoate. Y149 contacts N-formimidoyl-L-glutamate. H244 contacts Fe(3+). H244 is a Zn(2+) binding site. E247 serves as a coordination point for 4-imidazolone-5-propanoate. D323 lines the Fe(3+) pocket. D323 is a binding site for Zn(2+). N325 serves as a coordination point for N-formimidoyl-L-glutamate.

Belongs to the metallo-dependent hydrolases superfamily. HutI family. Zn(2+) serves as cofactor. It depends on Fe(3+) as a cofactor.

Its subcellular location is the cytoplasm. The catalysed reaction is 4-imidazolone-5-propanoate + H2O = N-formimidoyl-L-glutamate. The protein operates within amino-acid degradation; L-histidine degradation into L-glutamate; N-formimidoyl-L-glutamate from L-histidine: step 3/3. Functionally, catalyzes the hydrolytic cleavage of the carbon-nitrogen bond in imidazolone-5-propanoate to yield N-formimidoyl-L-glutamate. It is the third step in the universal histidine degradation pathway. The polypeptide is Imidazolonepropionase (Halobacterium salinarum (strain ATCC 29341 / DSM 671 / R1)).